Reading from the N-terminus, the 762-residue chain is Cell surface protein (762 aa).

Positions 1 to 26 (MKNLKKLIAVVSTFALVFSAMAVGFA) are cleaved as a signal peptide. 3 SLH domains span residues 27–90 (ATTP…EMAK), 92–155 (EKSA…WPYG), and 156–204 (YLAK…KEVL). 4 O-linked (Glc...) tyrosine glycosylation sites follow: Y297, Y516, Y520, and Y632.

Post-translationally, glycosylated; contains 8% carbohydrates, which correspond to about 40 to 50 sugar molecules per monomer. O-linked glycans consist of Glc, GalNAc and GlcNAc.

It is found in the secreted. The protein localises to the cell wall. The protein resides in the S-layer. Its function is as follows. The S-layer is a paracrystalline mono-layered assembly of proteins which coat the surface of bacteria. The polypeptide is Cell surface protein (Thermoanaerobacter kivui (Acetogenium kivui)).